The following is a 445-amino-acid chain: Hydroxycinnamoyl-CoA:5-hydroxyanthranilate N-hydroxycinnamoyltransferase HHT4 (445 aa).

It belongs to the plant acyltransferase family.

It carries out the reaction 5-hydroxyanthranilate + (E)-4-coumaroyl-CoA = avenanthramide A + CoA. The enzyme catalyses 5-hydroxyanthranilate + (E)-caffeoyl-CoA = avenanthramide C + CoA. Involved in the biosynthesis of avenanthramide phytoalexins, which are phenolic alkaloids found mainly in oats. Catalyzes the N-acylation of 5-hydroxyanthranilate with 4-coumaroyl-CoA or caffeoyl-CoA as acyl donors, forming avenanthramide A and avenanthramide C, respectively. Does not accept feruloyl-CoA as a substrate. The sequence is that of Hydroxycinnamoyl-CoA:5-hydroxyanthranilate N-hydroxycinnamoyltransferase HHT4 from Avena sativa (Oat).